The following is a 623-amino-acid chain: Replication protein A 70 kDa DNA-binding subunit (623 aa).

An N-acetylmethionine modification is found at Met1. Glycyl lysine isopeptide (Lys-Gly) (interchain with G-Cter in ubiquitin) cross-links involve residues Lys22 and Lys88. The interval 116-163 is disordered; it reads VPYNEGYGQQQQQQQQQQQQAVPSPASAATPPASKPQPQNGSLGMGST. Low complexity predominate over residues 124–154; it reads QQQQQQQQQQQQAVPSPASAATPPASKPQPQ. N6-acetyllysine; alternate is present on residues Lys172 and Lys176. Residues Lys172 and Lys176 each participate in a glycyl lysine isopeptide (Lys-Gly) (interchain with G-Cter in ubiquitin); alternate cross-link. The residue at position 189 (Thr189) is a Phosphothreonine. Lys192 is covalently cross-linked (Glycyl lysine isopeptide (Lys-Gly) (interchain with G-Cter in ubiquitin)). Thr200 carries the post-translational modification Phosphothreonine. Positions 206–290 form a DNA-binding region, OB; that stretch reads WTICARVTNK…VKNDYEMTFN (85 aa). Residues Lys229 and Lys253 each participate in a glycyl lysine isopeptide (Lys-Gly) (interchain with G-Cter in ubiquitin) cross-link. Position 268 is an N6-acetyllysine; alternate (Lys268). Residue Lys268 forms a Glycyl lysine isopeptide (Lys-Gly) (interchain with G-Cter in ubiquitin); alternate linkage. Residues Lys276 and Lys340 each participate in a glycyl lysine isopeptide (Lys-Gly) (interchain with G-Cter in ubiquitin) cross-link. Ser393 carries the post-translational modification Phosphoserine. Residue Lys419 forms a Glycyl lysine isopeptide (Lys-Gly) (interchain with G-Cter in ubiquitin) linkage. Lys458 participates in a covalent cross-link: Glycyl lysine isopeptide (Lys-Gly) (interchain with G-Cter in SUMO). Lys467 participates in a covalent cross-link: Glycyl lysine isopeptide (Lys-Gly) (interchain with G-Cter in ubiquitin). The C4-type zinc finger occupies 490–512; it reads CPTQDCNKKVIDQQNGLYRCEKC. Residue Lys562 forms a Glycyl lysine isopeptide (Lys-Gly) (interchain with G-Cter in ubiquitin) linkage. A Glycyl lysine isopeptide (Lys-Gly) (interchain with G-Cter in SUMO) cross-link involves residue Lys586.

It belongs to the replication factor A protein 1 family. Component of the canonical replication protein A complex (RPA), a heterotrimer composed of RPA1, RPA2 and RPA3. The DNA-binding activity may reside exclusively on the RPA1 subunit. Interacts with PRPF19; the PRP19-CDC5L complex is recruited to the sites of DNA repair where it ubiquitinates the replication protein A complex (RPA). Interacts with RIPK1. Interacts with the polymerase alpha subunit POLA1/p180; this interaction stabilizes the replicative complex and reduces the misincorporation rate of DNA polymerase alpha by acting as a fidelity clamp. Interacts with RAD51 and SENP6 to regulate DNA repair. Interacts with HELB; this interaction promotes HELB recruitment to chromatin following DNA damage. Interacts with PRIMPOL; leading to recruit PRIMPOL on chromatin and stimulate its DNA primase activity. Interacts with XPA; the interaction is direct and associates XPA with the RPA complex. Interacts with ETAA1; the interaction is direct and promotes ETAA1 recruitment at stalled replication forks. Interacts with RPA1; this interaction associates HROB with the RPA complex. Interacts (when poly-ADP-ribosylated) with HTATSF1. In terms of processing, DNA damage-induced 'Lys-63'-linked polyubiquitination by PRPF19 mediates ATRIP recruitment to the RPA complex at sites of DNA damage and activation of ATR. Ubiquitinated by RFWD3 at stalled replication forks in response to DNA damage: ubiquitination by RFWD3 does not lead to degradation by the proteasome and promotes removal of the RPA complex from stalled replication forks, promoting homologous recombination. Post-translationally, sumoylated on lysine residues Lys-458 and Lys-586, with Lys-458 being the major site. Sumoylation promotes recruitment of RAD51 to the DNA damage foci to initiate DNA repair through homologous recombination. Desumoylated by SENP6. Poly-ADP-ribosylated by PARP1; promoting recruitment of HTATSF1.

Its subcellular location is the nucleus. The protein localises to the PML body. Functionally, as part of the heterotrimeric replication protein A complex (RPA/RP-A), binds and stabilizes single-stranded DNA intermediates, that form during DNA replication or upon DNA stress. It prevents their reannealing and in parallel, recruits and activates different proteins and complexes involved in DNA metabolism. Thereby, it plays an essential role both in DNA replication and the cellular response to DNA damage. In the cellular response to DNA damage, the RPA complex controls DNA repair and DNA damage checkpoint activation. Through recruitment of ATRIP activates the ATR kinase a master regulator of the DNA damage response. It is required for the recruitment of the DNA double-strand break repair factors RAD51 and RAD52 to chromatin in response to DNA damage. Also recruits to sites of DNA damage proteins like XPA and XPG that are involved in nucleotide excision repair and is required for this mechanism of DNA repair. Also plays a role in base excision repair (BER) probably through interaction with UNG. Also recruits SMARCAL1/HARP, which is involved in replication fork restart, to sites of DNA damage. May also play a role in telomere maintenance. The sequence is that of Replication protein A 70 kDa DNA-binding subunit (Rpa1) from Mus musculus (Mouse).